The chain runs to 205 residues: Large ribosomal subunit protein uL18 (205 aa).

Belongs to the universal ribosomal protein uL18 family. In terms of assembly, part of the 50S ribosomal subunit. Contacts the 5S and 23S rRNAs.

This is one of the proteins that bind and probably mediate the attachment of the 5S RNA into the large ribosomal subunit, where it forms part of the central protuberance. This is Large ribosomal subunit protein uL18 from Pyrobaculum neutrophilum (strain DSM 2338 / JCM 9278 / NBRC 100436 / V24Sta) (Thermoproteus neutrophilus).